The chain runs to 27 residues: Potassium channel toxin alpha-KTx 9.11 (27 aa).

3 cysteine pairs are disulfide-bonded: Cys-3-Cys-19, Cys-6-Cys-23, and Cys-10-Cys-25.

Belongs to the short scorpion toxin superfamily. Potassium channel inhibitor family. Alpha-KTx 09 subfamily. In terms of tissue distribution, expressed by the venom gland.

Its subcellular location is the secreted. Functionally, may play a role in blocking voltage-gated potassium channels Kv1.2/KCNA2, Kv1.3/KCNA3 and Kv1.6/KCNA6 to a lesser extent. In Mesobuthus gibbosus (Mediterranean checkered scorpion), this protein is Potassium channel toxin alpha-KTx 9.11.